The chain runs to 119 residues: Holo-[acyl-carrier-protein] synthase (119 aa).

Mg(2+)-binding residues include aspartate 8 and glutamate 58.

Belongs to the P-Pant transferase superfamily. AcpS family. Mg(2+) serves as cofactor.

Its subcellular location is the cytoplasm. The catalysed reaction is apo-[ACP] + CoA = holo-[ACP] + adenosine 3',5'-bisphosphate + H(+). In terms of biological role, transfers the 4'-phosphopantetheine moiety from coenzyme A to a Ser of acyl-carrier-protein. This is Holo-[acyl-carrier-protein] synthase from Bacillus cereus (strain B4264).